The primary structure comprises 409 residues: Peptidase T (409 aa).

His-78 provides a ligand contact to Zn(2+). The active site involves Asp-80. Asp-140 contacts Zn(2+). Residue Glu-173 is the Proton acceptor of the active site. Zn(2+) contacts are provided by Glu-174, Asp-196, and His-379.

The protein belongs to the peptidase M20B family. It depends on Zn(2+) as a cofactor.

It is found in the cytoplasm. It catalyses the reaction Release of the N-terminal residue from a tripeptide.. Cleaves the N-terminal amino acid of tripeptides. This chain is Peptidase T, found in Salmonella enteritidis PT4 (strain P125109).